The chain runs to 693 residues: CREB-regulated transcription coactivator 2 (693 aa).

Positions 1–20 (MATSGANGPGSATASASNPR) are enriched in polar residues. The tract at residues 1–30 (MATSGANGPGSATASASNPRKFSEKIALQK) is disordered. An N-acetylalanine modification is found at Ala2. Asymmetric dimethylarginine; by PRMT6 is present on Arg51. Ser70, Ser86, and Ser90 each carry phosphoserine. Residues Arg99, Arg120, and Arg123 each carry the asymmetric dimethylarginine; by PRMT6 modification. The residue at position 136 (Ser136) is a Phosphoserine. Asymmetric dimethylarginine; by PRMT6 is present on residues Arg161 and Arg168. Thr169 bears the Phosphothreonine mark. A Phosphoserine modification is found at Ser171. Over residues 174-188 (ALHTSVMNPSPQDTY) the composition is skewed to polar residues. A disordered region spans residues 174–210 (ALHTSVMNPSPQDTYPSPAAPSVLPSRRGGCLDGETD). Residues 209–215 (TDSKVPA) are required for interaction with COP1. Residue Lys234 forms a Glycyl lysine isopeptide (Lys-Gly) (interchain with G-Cter in SUMO2) linkage. The Nuclear export signal signature appears at 271-287 (TGGSLPDLTNLHFPPPL). 3 disordered regions span residues 271-307 (TGGS…GSST), 335-463 (HSPL…SPTL), and 476-548 (KLPT…QSYH). Ser274 is subject to Phosphoserine; by MARK2. The residue at position 306 (Ser306) is a Phosphoserine. Residues 339–351 (SHPSFQSSLSNPN) show a composition bias toward polar residues. Composition is skewed to low complexity over residues 352-378 (LQAS…SSLA) and 386-424 (SLGH…PGAS). 4 positions are modified to phosphoserine: Ser368, Ser393, Ser433, and Ser456. A compositionally biased stretch (polar residues) spans 447 to 463 (SQQQLPKQFSPTMSPTL). Tyr488 is modified (phosphotyrosine). Phosphoserine is present on residues Ser489 and Ser492. Thr501 bears the Phosphothreonine mark. 2 positions are modified to phosphoserine: Ser613 and Ser624.

Belongs to the TORC family. In terms of assembly, binds, as a tetramer, through its N-terminal region, with the bZIP domain of CREB1. 'Arg-314' in the bZIP domain of CREB1 is essential for this interaction. Interaction, via its C-terminal, with TAF4, enhances recruitment of TAF4 to CREB1. Interacts with SIK2. Interacts with 14-3-3 proteins, YWHAB and YWHAG. Interacts (probably when phosphorylated at Ser-171) with YWHAE. Interacts with calmodulin-dependent catalytic subunit PPP3CA/calcineurin A. Interaction with COP1 mediates nuclear export and degradation of CRTC2. In terms of processing, phosphorylation/dephosphorylation states of Ser-171 are required for regulating transduction of CREB activity. CRTCs/TORCs are inactive when phosphorylated, and active when dephosphorylated at this site. This primary site of phosphorylation, is regulated by cAMP and calcium levels and is dependent on the phosphorylation of SIKs (SIK1 and SIK2) by LKB1. Following adenylyl cyclase activation, dephosphorylated at Ser-171 by PPP3CA/calcineurin A resulting in CRTC2 dissociation from 14-3-3 proteins and PPP3CA. Both insulin and AMPK increase this phosphorylation of CRTC2 while glucagon suppresses it. Phosphorylation at Ser-274 by MARK2 is induced under low glucose conditions and dephosphorylated in response to glucose influx. Phosphorylation at Ser-274 promotes interaction with 14-3-3 proteins and translocation to the cytoplasm. Post-translationally, asymmetric dimethylation of arginine resisues by PRMT6 enhances the association of CRTC2 with CREB on the promoters of gluconeogenic genes.

It localises to the cytoplasm. Its subcellular location is the nucleus. Transcriptional coactivator for CREB1 which activates transcription through both consensus and variant cAMP response element (CRE) sites. Acts as a coactivator, in the SIK/TORC signaling pathway, being active when dephosphorylated and acts independently of CREB1 'Ser-133' phosphorylation. Enhances the interaction of CREB1 with TAF4. Regulates gluconeogenesis as a component of the LKB1/AMPK/TORC2 signaling pathway. Regulates the expression of specific genes such as the steroidogenic gene, StAR. Potent coactivator of PPARGC1A and inducer of mitochondrial biogenesis in muscle cells. The protein is CREB-regulated transcription coactivator 2 (CRTC2) of Bos taurus (Bovine).